The following is a 247-amino-acid chain: MIFDPPLQSGQLVSRYKRFLTDVQLDNGEVITIHCANTGAMTGCAEPGTRVWYSTSSNPKRKLPHSWEIAESPAGHFICVNTARANQLARELIEQDALAPLRGYARLRTEVKYGEENSRIDLLLEDDHRPACYIEVKSVTLLDEREQAGMGYFPDAVTTRGAKHLRELMAMKAAGHRAVLLFMVLHSGIVRMRPAAHIDPHYSLLIEQAITAGVEILCYRPHVGVQSMVAQDFIPFESCHLLPEGSE.

The protein belongs to the SfsA family.

This is Sugar fermentation stimulation protein homolog from Aeromonas hydrophila subsp. hydrophila (strain ATCC 7966 / DSM 30187 / BCRC 13018 / CCUG 14551 / JCM 1027 / KCTC 2358 / NCIMB 9240 / NCTC 8049).